Reading from the N-terminus, the 342-residue chain is Replication factor C subunit 4 (342 aa).

Residues Val-24, Val-36, 61 to 68 (GMPGIGKT), Asn-157, and Arg-215 each bind ATP.

It belongs to the activator 1 small subunits family. As to quaternary structure, heteropentamer of subunits rfc1, rfc2, rfc3, rfc4 and rfc5 that forms a complex (RFC) with PCNA in the presence of ATP. Two other complexes exist where rfc1 can be replaced by either ctf18 or elg1 to form the ctf18-RFC or the elg1-RFC complexes respectively.

The protein localises to the nucleus. In terms of biological role, the elongation of primed DNA templates by DNA polymerase delta and epsilon requires the action of the accessory proteins PCNA and activator 1. The protein is Replication factor C subunit 4 (rfc4) of Schizosaccharomyces pombe (strain 972 / ATCC 24843) (Fission yeast).